A 193-amino-acid chain; its full sequence is ATP-dependent Clp protease proteolytic subunit (193 aa).

Catalysis depends on Ser98, which acts as the Nucleophile. His123 is an active-site residue.

Belongs to the peptidase S14 family. In terms of assembly, fourteen ClpP subunits assemble into 2 heptameric rings which stack back to back to give a disk-like structure with a central cavity, resembling the structure of eukaryotic proteasomes.

Its subcellular location is the cytoplasm. The enzyme catalyses Hydrolysis of proteins to small peptides in the presence of ATP and magnesium. alpha-casein is the usual test substrate. In the absence of ATP, only oligopeptides shorter than five residues are hydrolyzed (such as succinyl-Leu-Tyr-|-NHMec, and Leu-Tyr-Leu-|-Tyr-Trp, in which cleavage of the -Tyr-|-Leu- and -Tyr-|-Trp bonds also occurs).. Cleaves peptides in various proteins in a process that requires ATP hydrolysis. Has a chymotrypsin-like activity. Plays a major role in the degradation of misfolded proteins. The chain is ATP-dependent Clp protease proteolytic subunit from Clostridium acetobutylicum (strain ATCC 824 / DSM 792 / JCM 1419 / IAM 19013 / LMG 5710 / NBRC 13948 / NRRL B-527 / VKM B-1787 / 2291 / W).